The primary structure comprises 63 residues: Large ribosomal subunit protein uL29 (63 aa).

It belongs to the universal ribosomal protein uL29 family.

In Vibrio vulnificus (strain CMCP6), this protein is Large ribosomal subunit protein uL29.